The primary structure comprises 152 residues: Syntaxin-8A (152 aa).

The segment covering 1 to 14 has biased composition (low complexity); sequence MNNNNNFNSNFNSN. A disordered region spans residues 1–22; the sequence is MNNNNNFNSNFNSNRISSTQPY. At 1-131 the chain is on the cytoplasmic side; sequence MNNNNNFNSN…LTQQSKTTGY (131 aa). Residues 60-122 enclose the t-SNARE coiled-coil homology domain; that stretch reads KRDMEEQDKM…RNTTKNLITL (63 aa). The chain crosses the membrane as a helical; Anchor for type IV membrane protein span at residues 132 to 152; that stretch reads CSAICFLLLVLLVIIILASVL.

Belongs to the syntaxin family. As to quaternary structure, component of the SNARE complex composed of syn7A, syn8A, vamp7A and vti1A.

It is found in the endosome membrane. Functionally, involved in the targeting and/or fusion of transport vesicles to their target membrane during transport of proteins from the early endosome to the lysosome. Required for fusion of late endosomes with lysosomes and homotypic lysosomal fusion. The sequence is that of Syntaxin-8A from Dictyostelium discoideum (Social amoeba).